Consider the following 131-residue polypeptide: Large ribosomal subunit protein bL19c (131 aa).

The protein belongs to the bacterial ribosomal protein bL19 family.

It is found in the plastid. It localises to the cyanelle. Functionally, this protein is located at the 30S-50S ribosomal subunit interface and may play a role in the structure and function of the aminoacyl-tRNA binding site. The sequence is that of Large ribosomal subunit protein bL19c (rpl19) from Cyanophora paradoxa.